A 499-amino-acid chain; its full sequence is Centrosomal protein of 57 kDa (499 aa).

Low complexity predominate over residues 1–16 (MAAASVSAASDSQFSS). Residues 1 to 41 (MAAASVSAASDSQFSSVLAEPSRSNGNMVHHSSSPYVLYPP) form a disordered region. Residues 22-35 (SRSNGNMVHHSSSP) show a composition bias toward polar residues. Serine 53 carries the phosphoserine modification. Residues 58–239 (TFAYPESNSR…RAAELQSGIE (182 aa)) form a centrosome localization domain (CLD) region. A coiled-coil region spans residues 63-242 (ESNSRAIFSA…ELQSGIEANR (180 aa)). Disordered regions lie at residues 255-275 (TSTR…GFRN) and 424-476 (LEKQ…SRKN). Positions 278-490 (GAQPHYRLCL…KDMQTLQNSL (213 aa)) are mediates interaction with microtubules. Positions 388–491 (PSEELKDNLE…DMQTLQNSLQ (104 aa)) form a coiled coil. Basic and acidic residues predominate over residues 427 to 443 (QSTDKQKELKGNKKTLD). Residues 448 to 458 (SSSRSSVITRT) are compositionally biased toward low complexity. The segment covering 460-474 (SKKDFTKQRPGEKSR) has biased composition (basic and acidic residues).

Belongs to the translokin family. Homodimer and homooligomer. Interacts with FGF2 and RAP80. Does not interact with FGF1 or FGF2 isoform 24 kDa. Interacts with microtubules. Ubiquitous (at protein level).

The protein localises to the nucleus. Its subcellular location is the cytoplasm. The protein resides in the cytoskeleton. It is found in the microtubule organizing center. It localises to the centrosome. Functionally, centrosomal protein which may be required for microtubule attachment to centrosomes. May act by forming ring-like structures around microtubules. Mediates nuclear translocation and mitogenic activity of the internalized growth factor FGF2. This chain is Centrosomal protein of 57 kDa (Cep57), found in Rattus norvegicus (Rat).